The chain runs to 380 residues: Homoserine O-acetyltransferase (380 aa).

In terms of domain architecture, AB hydrolase-1 spans 70–366 (NAVLVFHALT…SPHGHDAFLI (297 aa)). Catalysis depends on serine 186, which acts as the Nucleophile. Arginine 250 lines the substrate pocket. Residues aspartate 333 and histidine 361 contribute to the active site. A substrate-binding site is contributed by aspartate 362.

This sequence belongs to the AB hydrolase superfamily. MetX family. Homodimer.

The protein localises to the cytoplasm. The catalysed reaction is L-homoserine + acetyl-CoA = O-acetyl-L-homoserine + CoA. The protein operates within amino-acid biosynthesis; L-methionine biosynthesis via de novo pathway; O-acetyl-L-homoserine from L-homoserine: step 1/1. Transfers an acetyl group from acetyl-CoA to L-homoserine, forming acetyl-L-homoserine. This is Homoserine O-acetyltransferase from Thermus thermophilus (strain ATCC 27634 / DSM 579 / HB8).